The primary structure comprises 420 residues: Cysteate-C-fatty acyltransferase (420 aa).

Pyridoxal 5'-phosphate is bound by residues 114 to 115 (GY), His-219, Thr-247, and Ala-249. An N6-(pyridoxal phosphate)lysine modification is found at Lys-250.

This sequence belongs to the class-II pyridoxal-phosphate-dependent aminotransferase family. Pyridoxal 5'-phosphate serves as cofactor.

The enzyme catalyses isopentadecanoyl-CoA + L-cysteate + H(+) = 3-oxocapnine + CO2 + CoA. The protein operates within lipid metabolism. Functionally, transferase involved in the biosynthesis of capnine, a sulfonolipid present in the outer membrane of gliding Bacteroidetes and essential for gliding motility. Catalyzes the formation of 3-dehydrocapnine from cysteate and isopentadecanoyl-CoA (13-methyl-myristoyl-CoA). In vitro, products are also detected when 13-methyl-myristic acid is substituted with tridecylic acid, myristic acid, pentadecanoic acid or palmitic acid. The protein is Cysteate-C-fatty acyltransferase of Capnocytophaga ochracea (strain ATCC 27872 / DSM 7271 / CCUG 9716 / JCM 12966 / NCTC 12371 / SS31 / VPI 2845) (Bacteroides ochraceus).